Reading from the N-terminus, the 330-residue chain is MKIAIDAMGGDHAPKAVVLGAMKAIKEYSDLHITLVGKEEEIRQYLTSDERITILHTDEKIESTEEPVRAVRRKKQASMVLAAQQVKDGEADACISAGSTGALMAAGLFVVGRMEGIERPALSPTMPTVDGKGFVMLDVGANVDAKPIHLYQYAVMGSVYAEKVRGIENPRVGLLNVGTEDEKGNELSKQVFAMLKDAPINFVGNVESRDLLQGVADVVVCDGFTGNVALKSLEGTALALFSMLKEQLMSSFTSKLAAAVLKPKLMVLKDKMDYSEYGGAALFGLKAPVIKAHGSSNDQSIFSAIRQTREMVAKEVIPTISSVMEKESLQ.

It belongs to the PlsX family. Homodimer. Probably interacts with PlsY.

The protein localises to the cytoplasm. It catalyses the reaction a fatty acyl-[ACP] + phosphate = an acyl phosphate + holo-[ACP]. It functions in the pathway lipid metabolism; phospholipid metabolism. Catalyzes the reversible formation of acyl-phosphate (acyl-PO(4)) from acyl-[acyl-carrier-protein] (acyl-ACP). This enzyme utilizes acyl-ACP as fatty acyl donor, but not acyl-CoA. This is Phosphate acyltransferase from Bacillus cereus (strain B4264).